Consider the following 631-residue polypeptide: Probable electron transfer flavoprotein-ubiquinone oxidoreductase, mitochondrial (631 aa).

Residue 65-79 (VCIVGGGPAGLATAI) participates in FAD binding. Residues C574, C600, C603, and C606 each contribute to the [4Fe-4S] cluster site. Positions 591 to 620 (TRLQINSQNCIHCKTCDIKAPRQDITWKVP) constitute a 4Fe-4S ferredoxin-type domain.

The protein belongs to the ETF-QO/FixC family. The cofactor is [4Fe-4S] cluster. FAD is required as a cofactor.

The protein resides in the mitochondrion inner membrane. The catalysed reaction is a ubiquinone + reduced [electron-transfer flavoprotein] = a ubiquinol + oxidized [electron-transfer flavoprotein] + H(+). Functionally, accepts electrons from ETF and reduces ubiquinone. The sequence is that of Probable electron transfer flavoprotein-ubiquinone oxidoreductase, mitochondrial (CIR2) from Saccharomyces cerevisiae (strain ATCC 204508 / S288c) (Baker's yeast).